We begin with the raw amino-acid sequence, 196 residues long: ATP-dependent Clp protease proteolytic subunit (196 aa).

The active-site Nucleophile is S98. H123 is a catalytic residue.

It belongs to the peptidase S14 family. Fourteen ClpP subunits assemble into 2 heptameric rings which stack back to back to give a disk-like structure with a central cavity, resembling the structure of eukaryotic proteasomes.

Its subcellular location is the cytoplasm. It carries out the reaction Hydrolysis of proteins to small peptides in the presence of ATP and magnesium. alpha-casein is the usual test substrate. In the absence of ATP, only oligopeptides shorter than five residues are hydrolyzed (such as succinyl-Leu-Tyr-|-NHMec, and Leu-Tyr-Leu-|-Tyr-Trp, in which cleavage of the -Tyr-|-Leu- and -Tyr-|-Trp bonds also occurs).. Cleaves peptides in various proteins in a process that requires ATP hydrolysis. Has a chymotrypsin-like activity. Plays a major role in the degradation of misfolded proteins. The protein is ATP-dependent Clp protease proteolytic subunit of Sulfurimonas denitrificans (strain ATCC 33889 / DSM 1251) (Thiomicrospira denitrificans (strain ATCC 33889 / DSM 1251)).